Reading from the N-terminus, the 208-residue chain is Large ribosomal subunit protein uL3 (208 aa).

The protein belongs to the universal ribosomal protein uL3 family. Part of the 50S ribosomal subunit. Forms a cluster with proteins L14 and L19.

One of the primary rRNA binding proteins, it binds directly near the 3'-end of the 23S rRNA, where it nucleates assembly of the 50S subunit. This is Large ribosomal subunit protein uL3 from Salinibacter ruber (strain DSM 13855 / M31).